We begin with the raw amino-acid sequence, 209 residues long: Ribosomal RNA large subunit methyltransferase E (209 aa).

S-adenosyl-L-methionine contacts are provided by Gly63, Trp65, Asp83, Asp99, and Asp124. The Proton acceptor role is filled by Lys164.

This sequence belongs to the class I-like SAM-binding methyltransferase superfamily. RNA methyltransferase RlmE family.

The protein resides in the cytoplasm. The catalysed reaction is uridine(2552) in 23S rRNA + S-adenosyl-L-methionine = 2'-O-methyluridine(2552) in 23S rRNA + S-adenosyl-L-homocysteine + H(+). Functionally, specifically methylates the uridine in position 2552 of 23S rRNA at the 2'-O position of the ribose in the fully assembled 50S ribosomal subunit. The sequence is that of Ribosomal RNA large subunit methyltransferase E from Shewanella putrefaciens (strain CN-32 / ATCC BAA-453).